Reading from the N-terminus, the 911-residue chain is Viral IRF4-like protein (911 aa).

The IRF tryptophan pentad repeat DNA-binding region spans serine 7–arginine 114. Disordered regions lie at residues threonine 147–serine 184, alanine 211–proline 302, glycine 494–cysteine 537, and glutamate 681–proline 727. The span at alanine 211 to threonine 221 shows a compositional bias: low complexity. Composition is skewed to polar residues over residues arginine 222–threonine 231 and glycine 495–glutamine 505. Residues arginine 697–proline 710 are compositionally biased toward basic residues.

The protein belongs to the IRF family. In terms of assembly, interacts with host MDM2; this interaction facilitates the proteasomal degradation of TP53/p53. Interacts with host IRF7; this interaction prevents IRF7 dimerization and subsequent activation.

The protein resides in the host nucleus. Its function is as follows. Plays a role in host cell apoptosis modulation by promoting TP53/p53 ubiquitination and subsequent degradation and thus down-regulating TP53/p53-mediated apoptosis. Works as a potential viral transcription factor to modulate host gene expression to build favorable environments for the viral lytic life cycle and greatly accelerates the induction of an immediate early gene RTA, early genes ORF36 and ORF57, late genes ORF25 and ORF64, and latent genes LANA1 and v-IRF3. Inhibits host interferon-alpha production by interacting with host IRF7 and preventing IRF7 dimerization. The chain is Viral IRF4-like protein (vIRF-4) from Homo sapiens (Human).